The chain runs to 419 residues: UDP-N-acetylglucosamine 1-carboxyvinyltransferase (419 aa).

22–23 (KN) is a phosphoenolpyruvate binding site. Arginine 95 serves as a coordination point for UDP-N-acetyl-alpha-D-glucosamine. Cysteine 119 (proton donor) is an active-site residue. A 2-(S-cysteinyl)pyruvic acid O-phosphothioketal modification is found at cysteine 119. UDP-N-acetyl-alpha-D-glucosamine-binding positions include 164–167 (KVSV), aspartate 308, and isoleucine 330.

This sequence belongs to the EPSP synthase family. MurA subfamily.

It is found in the cytoplasm. It catalyses the reaction phosphoenolpyruvate + UDP-N-acetyl-alpha-D-glucosamine = UDP-N-acetyl-3-O-(1-carboxyvinyl)-alpha-D-glucosamine + phosphate. The protein operates within cell wall biogenesis; peptidoglycan biosynthesis. In terms of biological role, cell wall formation. Adds enolpyruvyl to UDP-N-acetylglucosamine. The protein is UDP-N-acetylglucosamine 1-carboxyvinyltransferase of Rickettsia africae (strain ESF-5).